A 310-amino-acid chain; its full sequence is p-hydroxybenzoic acid efflux pump subunit AaeA (310 aa).

Residues 12–32 (VITLLLVIIAIVLIFRIWVFY) traverse the membrane as a helical segment.

Belongs to the membrane fusion protein (MFP) (TC 8.A.1) family.

The protein localises to the cell inner membrane. Its function is as follows. Forms an efflux pump with AaeB. The protein is p-hydroxybenzoic acid efflux pump subunit AaeA of Erwinia tasmaniensis (strain DSM 17950 / CFBP 7177 / CIP 109463 / NCPPB 4357 / Et1/99).